The sequence spans 735 residues: Peroxisomal multifunctional enzyme type 2 (735 aa).

The segment at 1 to 305 (MASPLRFDGR…IEVLHKIDSE (305 aa)) is (3R)-hydroxyacyl-CoA dehydrogenase. Residues 16 to 40 (GAGGGLGRAYALAFAERGALVVVND), leucine 21, and aspartate 40 contribute to the NAD(+) site. Position 46 is an N6-acetyllysine; alternate (lysine 46). Lysine 46 is modified (N6-succinyllysine; alternate). Residue serine 52 is modified to Phosphoserine. Residues lysine 57 and lysine 68 each carry the N6-succinyllysine modification. 75 to 76 (SV) contacts NAD(+). Lysine 84 is subject to N6-succinyllysine. NAD(+) is bound at residue asparagine 99. A substrate-binding site is contributed by serine 151. The active-site Proton acceptor is tyrosine 164. NAD(+) is bound by residues 164–168 (YSAAK) and 196–199 (AGSR). Threonine 265 is subject to Phosphothreonine. Lysine 275 is subject to N6-succinyllysine. Phosphoserine is present on residues serine 304 and serine 308. The enoyl-CoA hydratase 2 stretch occupies residues 321-621 (SGFAGVVGHK…AQTPSEGGAL (301 aa)). Residue lysine 355 is modified to N6-succinyllysine. Residue 405-406 (HG) coordinates (3R)-3-hydroxydecanoyl-CoA. The residue at position 423 (lysine 423) is an N6-succinyllysine. (3R)-3-hydroxydecanoyl-CoA-binding positions include lysine 434, 509–514 (DSNPLH), glycine 532, and phenylalanine 562. A MaoC-like domain is found at 483–599 (VPSRPPDAVL…QETGDIVISN (117 aa)). Lysine 564 is subject to N6-acetyllysine. Lysine 578 and lysine 662 each carry N6-succinyllysine. One can recognise an SCP2 domain in the interval 623 to 735 (SALVFGEIGR…QMILKDYAKL (113 aa)). Lysine 668 carries the N6-acetyllysine modification. 2 residues coordinate substrate: glutamine 705 and glutamine 723. Lysine 724 carries the N6-succinyllysine modification. The Microbody targeting signal motif lies at 733-735 (AKL).

Belongs to the short-chain dehydrogenases/reductases (SDR) family. In terms of assembly, homodimer.

Its subcellular location is the peroxisome. The enzyme catalyses a (3R)-3-hydroxyacyl-CoA + NAD(+) = a 3-oxoacyl-CoA + NADH + H(+). It catalyses the reaction (24R,25R)-3alpha,7alpha,12alpha,24-tetrahydroxy-5beta-cholestan-26-oyl-CoA = (24E)-3alpha,7alpha,12alpha-trihydroxy-5beta-cholest-24-en-26-oyl-CoA + H2O. It carries out the reaction a (3R)-3-hydroxyacyl-CoA = a (2E)-enoyl-CoA + H2O. The catalysed reaction is (2E)-octenoyl-CoA + H2O = (3R)-hydroxyoctanoyl-CoA. The enzyme catalyses (3R)-hydroxyoctanoyl-CoA + NAD(+) = 3-oxooctanoyl-CoA + NADH + H(+). It catalyses the reaction (3R)-hydroxyhexadecanoyl-CoA + NAD(+) = 3-oxohexadecanoyl-CoA + NADH + H(+). It carries out the reaction (2E)-hexadecenedioyl-CoA + H2O = (3R)-hydroxyhexadecanedioyl-CoA. The catalysed reaction is (3R)-hydroxyhexadecanedioyl-CoA + NAD(+) = 3-oxohexadecanedioyl-CoA + NADH + H(+). The enzyme catalyses (3R)-hydroxyhexadecanoyl-CoA = (2E)-hexadecenoyl-CoA + H2O. It catalyses the reaction (3R)-3-hydroxydecanoyl-CoA = (2E)-decenoyl-CoA + H2O. It carries out the reaction (3R)-3-hydroxydecanoyl-CoA + NAD(+) = 3-oxodecanoyl-CoA + NADH + H(+). The catalysed reaction is (24R,25R)-3alpha,7alpha,12alpha,24-tetrahydroxy-5beta-cholestan-26-oyl-CoA + NAD(+) = 3alpha,7alpha,12alpha-trihydroxy-24-oxo-5beta-cholestan-26-oyl-CoA + NADH + H(+). It participates in lipid metabolism; fatty acid beta-oxidation. Functionally, bifunctional enzyme acting on the peroxisomal fatty acid beta-oxidation pathway. Catalyzes two of the four reactions in fatty acid degradation: hydration of 2-enoyl-CoA (trans-2-enoyl-CoA) to produce (3R)-3-hydroxyacyl-CoA, and dehydrogenation of (3R)-3-hydroxyacyl-CoA to produce 3-ketoacyl-CoA (3-oxoacyl-CoA), which is further metabolized by SCPx. Can use straight-chain and branched-chain fatty acids, as well as bile acid intermediates as substrates. This chain is Peroxisomal multifunctional enzyme type 2, found in Rattus norvegicus (Rat).